The sequence spans 137 residues: Large-conductance mechanosensitive channel (137 aa).

2 helical membrane passes run phenylalanine 10–glycine 30 and glycine 76–isoleucine 96.

This sequence belongs to the MscL family. As to quaternary structure, homopentamer.

Its subcellular location is the cell inner membrane. In terms of biological role, channel that opens in response to stretch forces in the membrane lipid bilayer. May participate in the regulation of osmotic pressure changes within the cell. This chain is Large-conductance mechanosensitive channel, found in Klebsiella pneumoniae subsp. pneumoniae (strain ATCC 700721 / MGH 78578).